The chain runs to 268 residues: MNMKEISKVVDLVRESNPLVHNITNVVVTNFTANGLLALGASPVMAYAKEEVAEMASIAGALVLNMGTLRPDEVEAMLLAGKSANRNDVPVLFDPVGAGATSYRTEVARHIPAEIELAIIRGNAAEIANVINEKWEIKGVDAGAGNGNVVSIAKQAADELNTVAVITGKEDVVTDGERTIVIRNGHSILTKITGTGCLLTSVIGAFVAVEKDYVKAAVAALTFYGVAAELAAAKTVEKGPGSFQIEFLNQLANTTSGDIEKYGKIEVI.

Methionine 45 contributes to the substrate binding site. Residues arginine 121 and threonine 167 each coordinate ATP. Position 194 (glycine 194) interacts with substrate.

The protein belongs to the Thz kinase family. It depends on Mg(2+) as a cofactor.

It catalyses the reaction 5-(2-hydroxyethyl)-4-methylthiazole + ATP = 4-methyl-5-(2-phosphooxyethyl)-thiazole + ADP + H(+). The protein operates within cofactor biosynthesis; thiamine diphosphate biosynthesis; 4-methyl-5-(2-phosphoethyl)-thiazole from 5-(2-hydroxyethyl)-4-methylthiazole: step 1/1. In terms of biological role, catalyzes the phosphorylation of the hydroxyl group of 4-methyl-5-beta-hydroxyethylthiazole (THZ). The sequence is that of Hydroxyethylthiazole kinase from Bacillus thuringiensis (strain Al Hakam).